Reading from the N-terminus, the 583-residue chain is Membrane protein insertase YidC (583 aa).

The helical transmembrane segment at 5 to 25 (SVTGLALIALIMIVWLQFMSP) threads the bilayer. A disordered region spans residues 28 to 50 (KSVQPDNRPKAQTTATVSQEKTE). Polar residues predominate over residues 37–46 (KAQTTATVSQ). The next 5 membrane-spanning stretches (helical) occupy residues 341-361 (PFAE…ISNY), 362-382 (GLII…LSMA), 427-447 (LGGC…FYVF), 477-497 (IPVY…TVFI), and 515-535 (LYIF…GLGL).

Belongs to the OXA1/ALB3/YidC family. Type 1 subfamily. As to quaternary structure, interacts with the Sec translocase complex via SecD. Specifically interacts with transmembrane segments of nascent integral membrane proteins during membrane integration.

Its subcellular location is the cell inner membrane. Functionally, required for the insertion and/or proper folding and/or complex formation of integral membrane proteins into the membrane. Involved in integration of membrane proteins that insert both dependently and independently of the Sec translocase complex, as well as at least some lipoproteins. Aids folding of multispanning membrane proteins. The sequence is that of Membrane protein insertase YidC from Chlorobium limicola (strain DSM 245 / NBRC 103803 / 6330).